A 333-amino-acid polypeptide reads, in one-letter code: D-fructose 1,6-bisphosphatase class 2/sedoheptulose 1,7-bisphosphatase (333 aa).

Mn(2+)-binding residues include aspartate 33, glutamate 57, aspartate 85, and glutamate 88. Residues 88–90, tyrosine 119, 164–166, and 186–188 each bind substrate; these read EGT, RTR, and DGD. Glutamate 213 is a binding site for Mn(2+).

It belongs to the FBPase class 2 family. As to quaternary structure, homotetramer. It depends on Mn(2+) as a cofactor.

It catalyses the reaction beta-D-fructose 1,6-bisphosphate + H2O = beta-D-fructose 6-phosphate + phosphate. The enzyme catalyses D-sedoheptulose 1,7-bisphosphate + H2O = D-sedoheptulose 7-phosphate + phosphate. It participates in carbohydrate biosynthesis; Calvin cycle. Functionally, catalyzes the hydrolysis of fructose 1,6-bisphosphate (Fru 1,6-P2) and sedoheptulose 1,7-bisphosphate (Sed 1,7-P2) to fructose 6-phosphate and sedoheptulose 7-phosphate, respectively. This chain is D-fructose 1,6-bisphosphatase class 2/sedoheptulose 1,7-bisphosphatase, found in Prochlorococcus marinus (strain MIT 9301).